The following is a 101-amino-acid chain: Small ribosomal subunit protein bS18c (101 aa).

The protein belongs to the bacterial ribosomal protein bS18 family. In terms of assembly, part of the 30S ribosomal subunit.

The protein resides in the plastid. Its subcellular location is the chloroplast. The protein is Small ribosomal subunit protein bS18c of Panax ginseng (Korean ginseng).